The following is a 300-amino-acid chain: D-alanine--D-alanine ligase (300 aa).

Positions K99–K293 constitute an ATP-grasp domain. I126–T181 is an ATP binding site. Residues D248, E260, and N262 each contribute to the Mg(2+) site.

This sequence belongs to the D-alanine--D-alanine ligase family. The cofactor is Mg(2+). Mn(2+) is required as a cofactor.

The protein localises to the cytoplasm. It catalyses the reaction 2 D-alanine + ATP = D-alanyl-D-alanine + ADP + phosphate + H(+). It participates in cell wall biogenesis; peptidoglycan biosynthesis. In terms of biological role, cell wall formation. The chain is D-alanine--D-alanine ligase from Clostridium botulinum (strain 657 / Type Ba4).